A 644-amino-acid polypeptide reads, in one-letter code: Chaperone protein HscA (644 aa).

Belongs to the heat shock protein 70 family.

In terms of biological role, chaperone involved in the maturation of iron-sulfur cluster-containing proteins. Has a low intrinsic ATPase activity which is markedly stimulated by HscB. Involved in the maturation of IscU. This chain is Chaperone protein HscA, found in Yersinia pseudotuberculosis serotype I (strain IP32953).